The primary structure comprises 391 residues: Recombination and repair protein (391 aa).

60 to 67 (GPSKSFKS) provides a ligand contact to ATP. Over residues 364-374 (KSPESKSKSAA) the composition is skewed to basic and acidic residues. Residues 364–391 (KSPESKSKSAADLETDLEQLSDMEEFNE) are disordered. Residues 376-391 (LETDLEQLSDMEEFNE) are compositionally biased toward acidic residues.

Belongs to the RecA family.

In terms of biological role, important in genetic recombination, DNA repair, and replication. Possesses pairing and strand-transfer activity. Interacts with dda and gene 32 proteins. This Enterobacteria phage T4 (Bacteriophage T4) protein is Recombination and repair protein (UVSX).